The primary structure comprises 282 residues: Bifunctional protein FolD (282 aa).

NADP(+)-binding positions include 164–166 (GRS) and Ser-189.

The protein belongs to the tetrahydrofolate dehydrogenase/cyclohydrolase family. As to quaternary structure, homodimer.

It carries out the reaction (6R)-5,10-methylene-5,6,7,8-tetrahydrofolate + NADP(+) = (6R)-5,10-methenyltetrahydrofolate + NADPH. It catalyses the reaction (6R)-5,10-methenyltetrahydrofolate + H2O = (6R)-10-formyltetrahydrofolate + H(+). It functions in the pathway one-carbon metabolism; tetrahydrofolate interconversion. Functionally, catalyzes the oxidation of 5,10-methylenetetrahydrofolate to 5,10-methenyltetrahydrofolate and then the hydrolysis of 5,10-methenyltetrahydrofolate to 10-formyltetrahydrofolate. This is Bifunctional protein FolD from Anaeromyxobacter dehalogenans (strain 2CP-C).